The primary structure comprises 214 residues: Putative F-box protein At5g15670 (214 aa).

Positions 22–68 (RNKFDEIPHDLVIEILGRLPAKSVARFLTVSKLWATSIRSLDFIKSY) constitute an F-box domain.

This chain is Putative F-box protein At5g15670, found in Arabidopsis thaliana (Mouse-ear cress).